The chain runs to 242 residues: Probable 2-phosphosulfolactate phosphatase (242 aa).

It belongs to the ComB family. It depends on Mg(2+) as a cofactor.

The catalysed reaction is (2R)-O-phospho-3-sulfolactate + H2O = (2R)-3-sulfolactate + phosphate. The protein is Probable 2-phosphosulfolactate phosphatase of Synechococcus sp. (strain JA-3-3Ab) (Cyanobacteria bacterium Yellowstone A-Prime).